The chain runs to 390 residues: Adherens junction-associated protein 1 (390 aa).

A signal peptide spans 1 to 37 (MWITQLLGIRSGPPLGSHAWILIAIFQLAMDFIICES). Topologically, residues 38–262 (ESPGKAYKHL…NDTSGLAVHQ (225 aa)) are extracellular. Residues 218–253 (LQNPGIHNGKKSPGRISTTDPNPGNGKTARPPRIPN) are disordered. The helical transmembrane segment at 263-283 (IITITVSLIMVIAALITTLVL) threads the bilayer. Positions 283–390 (LKNCCAQSGN…VSEKWFEISC (108 aa)) are targeting signals. Topologically, residues 284–390 (KNCCAQSGNA…VSEKWFEISC (107 aa)) are cytoplasmic.

Its subcellular location is the basolateral cell membrane. It is found in the apical cell membrane. The protein resides in the cell junction. It localises to the adherens junction. Its function is as follows. May play a role in cell adhesion and cell migration. The sequence is that of Adherens junction-associated protein 1 (ajap1) from Xenopus tropicalis (Western clawed frog).